A 349-amino-acid polypeptide reads, in one-letter code: UDP-3-O-acylglucosamine N-acyltransferase (349 aa).

The active-site Proton acceptor is the histidine 242.

The protein belongs to the transferase hexapeptide repeat family. LpxD subfamily. In terms of assembly, homotrimer.

The catalysed reaction is a UDP-3-O-[(3R)-3-hydroxyacyl]-alpha-D-glucosamine + a (3R)-hydroxyacyl-[ACP] = a UDP-2-N,3-O-bis[(3R)-3-hydroxyacyl]-alpha-D-glucosamine + holo-[ACP] + H(+). It functions in the pathway bacterial outer membrane biogenesis; LPS lipid A biosynthesis. In terms of biological role, catalyzes the N-acylation of UDP-3-O-acylglucosamine using 3-hydroxyacyl-ACP as the acyl donor. Is involved in the biosynthesis of lipid A, a phosphorylated glycolipid that anchors the lipopolysaccharide to the outer membrane of the cell. The protein is UDP-3-O-acylglucosamine N-acyltransferase of Cytophaga hutchinsonii (strain ATCC 33406 / DSM 1761 / CIP 103989 / NBRC 15051 / NCIMB 9469 / D465).